The primary structure comprises 1302 residues: Neuroglian (1302 aa).

The first 23 residues, 1-23 (MWRQSTILAALLVALLCAGSAES), serve as a signal peptide directing secretion. Residues 24-1138 (KGNRPPRITK…ANAGWFIGMM (1115 aa)) are Extracellular-facing. Ig-like C2-type domains follow at residues 29-133 (PRIT…AELN), 134-225 (AFKD…YKIG), 245-330 (PPVR…QSFS), 339-426 (PYFT…VYLN), 432-524 (PTIS…TRIT), and 521-610 (TRIT…ANLI). 4 cysteine pairs are disulfide-bonded: Cys-59–Cys-111, Cys-155–Cys-212, Cys-268–Cys-317, and Cys-360–Cys-410. N-linked (GlcNAc...) asparagine glycans are attached at residues Asn-182 and Asn-198. Residues Asn-411 and Asn-448 are each glycosylated (N-linked (GlcNAc...) asparagine). Fibronectin type-III domains follow at residues 614-711 (VPNA…TQPD), 716-813 (NPDN…SGED), 818-915 (APTN…TPEG), 916-1017 (VPSP…LKDA), and 1021-1119 (APAT…TVEG). An intrachain disulfide couples Cys-625 to Cys-706. N-linked (GlcNAc...) asparagine glycosylation is found at Asn-652 and Asn-683. N-linked (GlcNAc...) asparagine glycosylation is present at Asn-821. An N-linked (GlcNAc...) asparagine glycan is attached at Asn-1125. The helical transmembrane segment at 1139-1154 (LALAFIIILFIIICII) threads the bilayer. Residues 1155 to 1302 (RRNRGGKYDV…AAAGAVATYV (148 aa)) are Cytoplasmic-facing. Basic and acidic residues predominate over residues 1172-1182 (GRRDYPEEGGF). Disordered stretches follow at residues 1172-1223 (GRRD…GDTG) and 1236-1291 (VPGK…ASNG). Residues 1188-1203 (PLDNKSAGRQSVSSAN) are compositionally biased toward polar residues. The span at 1253–1275 (AAAHQAAPTAGGSGAAGSAAAAG) shows a compositional bias: low complexity.

Forms a complex with Nrx-IV/Nrx and Cont. Forms a complex composed of septate junction proteins Nrx-IV/Nrx, Tsf2/MTf, Cont and Nrg during late embryogenesis. Restricted to the surface of neurons and glia in the developing nervous system. As to expression, restricted to non-neuronal tissues.

It is found in the cell membrane. The protein resides in the cell junction. Its subcellular location is the septate junction. Functionally, essential for septate junctions. Septate junctions, which are the equivalent of vertebrate tight junctions, are characterized by regular arrays of transverse structures that span the intermembrane space and form a physical barrier to diffusion. Required for formation of the hemolymph-brain barrier (the insect blood-brain barrier). Vital for embryonic development. Involved in the targeting for degradation or recycling of certain septate junction components, including kune and bou/boudin, by regulating their endocytosis. Its function is as follows. May play a role in neural and glial cell adhesion in the developing embryo. May be a more general cell adhesion molecule involved in non-neuronal tissues and imaginal disk morphogenesis. The chain is Neuroglian (Nrg) from Drosophila melanogaster (Fruit fly).